Reading from the N-terminus, the 483-residue chain is Phosphoenolpyruvate carboxylase (483 aa).

The tract at residues 1–20 (MKVPRCMSTQHPDNVNPPFF) is disordered.

The protein belongs to the PEPCase type 2 family. As to quaternary structure, homotetramer. The cofactor is Mg(2+).

The enzyme catalyses oxaloacetate + phosphate = phosphoenolpyruvate + hydrogencarbonate. Inhibited by NaCl, KCl, ATP, ADP, GTP and aspartate. Unlike E.coli, not regulated by acetyl-CoA. In terms of biological role, catalyzes the irreversible beta-carboxylation of phosphoenolpyruvate (PEP) to form oxaloacetate (OAA), a four-carbon dicarboxylic acid source for the tricarboxylic acid cycle. This Methanothermobacter thermautotrophicus (strain ATCC 29096 / DSM 1053 / JCM 10044 / NBRC 100330 / Delta H) (Methanobacterium thermoautotrophicum) protein is Phosphoenolpyruvate carboxylase (ppcA).